The sequence spans 72 residues: Translation initiation factor IF-1 (72 aa).

The S1-like domain maps to Met1–Lys72.

It belongs to the IF-1 family. In terms of assembly, component of the 30S ribosomal translation pre-initiation complex which assembles on the 30S ribosome in the order IF-2 and IF-3, IF-1 and N-formylmethionyl-tRNA(fMet); mRNA recruitment can occur at any time during PIC assembly.

The protein localises to the cytoplasm. Its function is as follows. One of the essential components for the initiation of protein synthesis. Stabilizes the binding of IF-2 and IF-3 on the 30S subunit to which N-formylmethionyl-tRNA(fMet) subsequently binds. Helps modulate mRNA selection, yielding the 30S pre-initiation complex (PIC). Upon addition of the 50S ribosomal subunit IF-1, IF-2 and IF-3 are released leaving the mature 70S translation initiation complex. The protein is Translation initiation factor IF-1 of Streptococcus gordonii (strain Challis / ATCC 35105 / BCRC 15272 / CH1 / DL1 / V288).